The sequence spans 391 residues: Dual-specificity RNA methyltransferase RlmN (391 aa).

Catalysis depends on Glu115, which acts as the Proton acceptor. The 243-residue stretch at 121–363 (EENRGTLCIS…SPIRTPRGED (243 aa)) folds into the Radical SAM core domain. A disulfide bridge links Cys128 with Cys368. Residues Cys135, Cys139, and Cys142 each contribute to the [4Fe-4S] cluster site. Residues 194–195 (GE), Ser226, 248–250 (SFH), and Asn325 contribute to the S-adenosyl-L-methionine site. The S-methylcysteine intermediate role is filled by Cys368.

It belongs to the radical SAM superfamily. RlmN family. Requires [4Fe-4S] cluster as cofactor.

It is found in the cytoplasm. It catalyses the reaction adenosine(2503) in 23S rRNA + 2 reduced [2Fe-2S]-[ferredoxin] + 2 S-adenosyl-L-methionine = 2-methyladenosine(2503) in 23S rRNA + 5'-deoxyadenosine + L-methionine + 2 oxidized [2Fe-2S]-[ferredoxin] + S-adenosyl-L-homocysteine. The enzyme catalyses adenosine(37) in tRNA + 2 reduced [2Fe-2S]-[ferredoxin] + 2 S-adenosyl-L-methionine = 2-methyladenosine(37) in tRNA + 5'-deoxyadenosine + L-methionine + 2 oxidized [2Fe-2S]-[ferredoxin] + S-adenosyl-L-homocysteine. Its function is as follows. Specifically methylates position 2 of adenine 2503 in 23S rRNA and position 2 of adenine 37 in tRNAs. m2A2503 modification seems to play a crucial role in the proofreading step occurring at the peptidyl transferase center and thus would serve to optimize ribosomal fidelity. This chain is Dual-specificity RNA methyltransferase RlmN, found in Paracoccus denitrificans (strain Pd 1222).